A 1345-amino-acid chain; its full sequence is Aldehyde oxidase 2 (1345 aa).

The region spanning 9-96 (DDLEFFVNGR…GAAVTTVEGV (88 aa)) is the 2Fe-2S ferredoxin-type domain. 4 residues coordinate [2Fe-2S] cluster: cysteine 48, cysteine 53, cysteine 56, and cysteine 78. Glutamine 117 provides a ligand contact to Mo-molybdopterin. Residues cysteine 118, cysteine 121, cysteine 153, and cysteine 155 each contribute to the [2Fe-2S] cluster site. Cysteine 155 serves as a coordination point for Mo-molybdopterin. Positions 238 to 423 (FYGERITWIA…GSVYIPHSQK (186 aa)) constitute an FAD-binding PCMH-type domain. FAD is bound by residues 266–273 (LISGNTAL), alanine 347, serine 356, histidine 360, aspartate 369, and leucine 413. Mo-molybdopterin is bound by residues 812 to 813 (GF), 1094 to 1097 (ASVG), glutamine 1209, and leucine 1274. Glutamate 1276 serves as the catalytic Proton acceptor; for azaheterocycle hydroxylase activity.

It belongs to the xanthine dehydrogenase family. In terms of assembly, homodimer. Requires [2Fe-2S] cluster as cofactor. It depends on FAD as a cofactor. Mo-molybdopterin is required as a cofactor. In terms of tissue distribution, expressed in olfactory mucosa epithelium (at protein level). Detected in skin.

The protein localises to the cytoplasm. The catalysed reaction is an aldehyde + O2 + H2O = a carboxylate + H2O2 + H(+). Oxidase with broad substrate specificity, oxidizing aromatic azaheterocycles, such as phthalazine, as well as aldehydes, such as benzaldehyde and retinal. Cannot use hypoxanthine as substrate. The sequence is that of Aldehyde oxidase 2 (Aox2) from Mus musculus (Mouse).